The primary structure comprises 528 residues: Coiled-coil domain-containing protein 116 (528 aa).

The segment at Gly43–Gln68 is disordered. Positions Thr51 to Gln60 are enriched in polar residues. The stretch at His81–Ala104 forms a coiled coil. 2 disordered regions span residues Pro335–Ala444 and Ser497–Ser528. Residues Pro363–Thr378 show a composition bias toward polar residues. The residue at position 389 (Ser389) is a Phosphoserine. Residues His419–Pro429 show a composition bias toward basic and acidic residues. Positions Pro434–Arg443 are enriched in polar residues. Over residues Ser497–Ser510 the composition is skewed to low complexity.

It is found in the cytoplasm. The protein resides in the cytoskeleton. The protein localises to the microtubule organizing center. It localises to the centrosome. The chain is Coiled-coil domain-containing protein 116 (CCDC116) from Macaca fascicularis (Crab-eating macaque).